Reading from the N-terminus, the 299-residue chain is DNA-binding transcriptional repressor CapW (299 aa).

A compositionally biased stretch (basic and acidic residues) spans 1 to 15 (MPDNFREGDKQDSQK). The tract at residues 1-21 (MPDNFREGDKQDSQKGRQGAR) is disordered. The interval 1–95 (MPDNFREGDK…LFQPVYMTSS (95 aa)) is winged HTH domain. Residues 96–207 (LECYLNDLLQ…LSRIVQAQNA (112 aa)) are WYL domain. Positions 131-211 (LRRLDTDVVS…VQAQNAGPDE (81 aa)) constitute a WYL domain. The tract at residues 156-200 (YQSMSDPQGSKRTLTPHSLVHDGYRWHTRAWCHKRGEYRDFLLSR) is probable ligand-binding region. The interval 208–299 (GPDEERANGD…KDEIYALLKQ (92 aa)) is WCX domain.

As to quaternary structure, homodimer.

Transcriptional regulator of a CBASS antivirus system. CBASS (cyclic oligonucleotide-based antiphage signaling system) provides immunity against bacteriophage. The CD-NTase protein synthesizes cyclic nucleotides in response to infection; these serve as specific second messenger signals. The signals activate a diverse range of effectors, leading to bacterial cell death and thus abortive phage infection. A type III CBASS system. Expression of this CBASS system (Cap18-Cap6-Cap7-CdnC-CapW-Cap17) in a susceptible E.coli (strain MG1655) confers resistance to bacteriophage P1. Binds specifically to and represses expression from the CBASS promoter, found between the genes for divergently transcribed capW and cdnC. The chain is DNA-binding transcriptional repressor CapW from Escherichia coli (strain KTE188).